The primary structure comprises 637 residues: Neuroendocrine convertase 2 (637 aa).

The N-terminal stretch at 1–24 (MEGGCGSQWKAAGLLFCVMVFASA) is a signal peptide. The propeptide occupies 25–108 (ERPVFTNHFL…QQEGFDRKKR (84 aa)). Residues 128–452 (QWYLFNTGQA…YGVLDAGAMV (325 aa)) enclose the Peptidase S8 domain. Active-site charge relay system residues include Asp166 and His207. 2 disulfides stabilise this stretch: Cys224-Cys375 and Cys316-Cys346. A glycan (N-linked (GlcNAc...) asparagine) is linked at Asn374. Ser383 (charge relay system) is an active-site residue. The P/Homo B domain occupies 460-596 (TVPERFHCVG…TLMLHGTQSA (137 aa)). Residues Cys467 and Cys493 are joined by a disulfide bond. N-linked (GlcNAc...) asparagine glycosylation is found at Asn513 and Asn523.

The protein belongs to the peptidase S8 family. Furin subfamily.

The protein resides in the cytoplasmic vesicle. Its subcellular location is the secretory vesicle. The protein localises to the secreted. The catalysed reaction is Release of protein hormones and neuropeptides from their precursors, generally by hydrolysis of -Lys-Arg-|- bonds.. Its function is as follows. Serine endopeptidase which is involved in the processing of hormone and other protein precursors at sites comprised of pairs of basic amino acid residues. Responsible for the release of glucagon from proglucagon in pancreatic A cells. The sequence is that of Neuroendocrine convertase 2 (Pcsk2) from Rattus norvegicus (Rat).